A 350-amino-acid polypeptide reads, in one-letter code: Phospho-N-acetylmuramoyl-pentapeptide-transferase (350 aa).

9 consecutive transmembrane segments (helical) span residues 28–48, 70–90, 100–120, 136–156, 164–184, 195–215, 221–241, 249–269, and 328–348; these read LPLLIAAVCATATAAVGIPLL, GTPTMGGLLVVPVGVVLGSLI, LLSLAVLTLAFMLIGGIDDWS, LLLQAMATAAFLAIAAWQGWI, FGLELPLGLMIWPLGLFVVLA, LDGLASGCGALVFTGLALQLM, GDPALAGFCMAMAGAWLGFLV, AFMGDTGSLAMGAALSGVALL, and QSVVPAFWLVTAGLVLLGLVL.

It belongs to the glycosyltransferase 4 family. MraY subfamily. Requires Mg(2+) as cofactor.

It localises to the cell inner membrane. The enzyme catalyses UDP-N-acetyl-alpha-D-muramoyl-L-alanyl-gamma-D-glutamyl-meso-2,6-diaminopimeloyl-D-alanyl-D-alanine + di-trans,octa-cis-undecaprenyl phosphate = di-trans,octa-cis-undecaprenyl diphospho-N-acetyl-alpha-D-muramoyl-L-alanyl-D-glutamyl-meso-2,6-diaminopimeloyl-D-alanyl-D-alanine + UMP. It functions in the pathway cell wall biogenesis; peptidoglycan biosynthesis. Catalyzes the initial step of the lipid cycle reactions in the biosynthesis of the cell wall peptidoglycan: transfers peptidoglycan precursor phospho-MurNAc-pentapeptide from UDP-MurNAc-pentapeptide onto the lipid carrier undecaprenyl phosphate, yielding undecaprenyl-pyrophosphoryl-MurNAc-pentapeptide, known as lipid I. The chain is Phospho-N-acetylmuramoyl-pentapeptide-transferase from Synechococcus sp. (strain CC9605).